A 142-amino-acid chain; its full sequence is Large ribosomal subunit protein uL13 (142 aa).

It belongs to the universal ribosomal protein uL13 family. In terms of assembly, part of the 50S ribosomal subunit.

Functionally, this protein is one of the early assembly proteins of the 50S ribosomal subunit, although it is not seen to bind rRNA by itself. It is important during the early stages of 50S assembly. The polypeptide is Large ribosomal subunit protein uL13 (Vibrio cholerae serotype O1 (strain M66-2)).